The following is a 128-amino-acid chain: Large ribosomal subunit protein uL22 (128 aa).

The protein belongs to the universal ribosomal protein uL22 family. As to quaternary structure, part of the 50S ribosomal subunit.

Functionally, this protein binds specifically to 23S rRNA; its binding is stimulated by other ribosomal proteins, e.g. L4, L17, and L20. It is important during the early stages of 50S assembly. It makes multiple contacts with different domains of the 23S rRNA in the assembled 50S subunit and ribosome. The globular domain of the protein is located near the polypeptide exit tunnel on the outside of the subunit, while an extended beta-hairpin is found that lines the wall of the exit tunnel in the center of the 70S ribosome. The sequence is that of Large ribosomal subunit protein uL22 from Prochlorococcus marinus (strain AS9601).